A 140-amino-acid chain; its full sequence is Ribosome maturation factor RimP (140 aa).

It belongs to the RimP family.

It localises to the cytoplasm. In terms of biological role, required for maturation of 30S ribosomal subunits. This Campylobacter jejuni subsp. jejuni serotype O:6 (strain 81116 / NCTC 11828) protein is Ribosome maturation factor RimP.